We begin with the raw amino-acid sequence, 496 residues long: Probable cytosol aminopeptidase (496 aa).

Mn(2+) is bound by residues Lys258 and Asp263. Lys270 is an active-site residue. Positions 281, 340, and 342 each coordinate Mn(2+). Arg344 is a catalytic residue.

It belongs to the peptidase M17 family. Mn(2+) is required as a cofactor.

Its subcellular location is the cytoplasm. It carries out the reaction Release of an N-terminal amino acid, Xaa-|-Yaa-, in which Xaa is preferably Leu, but may be other amino acids including Pro although not Arg or Lys, and Yaa may be Pro. Amino acid amides and methyl esters are also readily hydrolyzed, but rates on arylamides are exceedingly low.. The catalysed reaction is Release of an N-terminal amino acid, preferentially leucine, but not glutamic or aspartic acids.. In terms of biological role, presumably involved in the processing and regular turnover of intracellular proteins. Catalyzes the removal of unsubstituted N-terminal amino acids from various peptides. The sequence is that of Probable cytosol aminopeptidase from Helicobacter pylori (strain HPAG1).